The following is a 398-amino-acid chain: O-methyltransferase mpaG' (398 aa).

Ser144 provides a ligand contact to (4E,8E)-10-(4,6-dihydroxy-7-methyl-3-oxo-1,3-dihydro-2-benzofuran-5-yl)-4,8-dimethyldeca-4,8-dienoate. Ser144 provides a ligand contact to 4-farnesyl-3,5-dihydroxy-6-methylphthalide. Ser144 contributes to the 6-O-desmethylmycophenolate binding site. Asn197 serves as a coordination point for S-adenosyl-L-homocysteine. Tyr199 provides a ligand contact to (4E,8E)-10-(4,6-dihydroxy-7-methyl-3-oxo-1,3-dihydro-2-benzofuran-5-yl)-4,8-dimethyldeca-4,8-dienoate. Residue Tyr199 coordinates 4-farnesyl-3,5-dihydroxy-6-methylphthalide. Residue Tyr199 participates in 6-O-desmethylmycophenolate binding. Tyr203, Asp237, Gly239, His244, Asp245, Asp264, and Arg265 together coordinate S-adenosyl-L-homocysteine. An S-adenosyl-L-methionine-binding site is contributed by Asp264. Positions 265 and 267 each coordinate (4E,8E)-10-(4,6-dihydroxy-7-methyl-3-oxo-1,3-dihydro-2-benzofuran-5-yl)-4,8-dimethyldeca-4,8-dienoate. 6-O-desmethylmycophenolate is bound at residue Arg265. Residues Asp286, Ile287, and His302 each coordinate S-adenosyl-L-homocysteine. Residue Ser303 participates in (4E,8E)-10-(4,6-dihydroxy-7-methyl-3-oxo-1,3-dihydro-2-benzofuran-5-yl)-4,8-dimethyldeca-4,8-dienoate binding. Residue Ser303 participates in 4-farnesyl-3,5-dihydroxy-6-methylphthalide binding. 6-O-desmethylmycophenolate is bound at residue Ser303. His306 acts as the Proton acceptor in catalysis. Active-site residues include Glu335 and Glu362.

It belongs to the class I-like SAM-binding methyltransferase superfamily. Cation-independent O-methyltransferase family. As to quaternary structure, homodimer.

Its subcellular location is the cytoplasm. It localises to the cytosol. It carries out the reaction (4E,8E)-10-(4,6-dihydroxy-7-methyl-3-oxo-1,3-dihydro-2-benzofuran-5-yl)-4,8-dimethyldeca-4,8-dienoate + S-adenosyl-L-methionine = (4E,8E)-10-(4-hydroxy-6-methoxy-7-methyl-3-oxo-1,3-dihydro-2-benzofuran-5-yl)-4,8-dimethyldeca-4,8-dienoate + S-adenosyl-L-homocysteine + H(+). The enzyme catalyses 4-farnesyl-3,5-dihydroxy-6-methylphthalide + S-adenosyl-L-methionine = 4-farnesyl-3,5-dihydroxy-6-methoxylphthalide + S-adenosyl-L-homocysteine + H(+). The catalysed reaction is 6-O-desmethylmycophenolate + S-adenosyl-L-methionine = mycophenolate + S-adenosyl-L-homocysteine + H(+). It functions in the pathway secondary metabolite biosynthesis; terpenoid biosynthesis. In terms of biological role, O-methyltransferase; part of the gene cluster that mediates the biosynthesis of mycophenolic acid (MPA), the first isolated antibiotic natural product in the world obtained from a culture of Penicillium brevicompactum in 1893. MpaG' catalyzes the 5-O-methylation of three precursors in MPA biosynthesis including demethylmycophenolic acid (DMMPA), 4-farnesyl-3,5-dihydroxy-6-methylphthalide (FDHMP), and an intermediate containing three fewer carbon atoms compared to FDHMP (FDHMP-3C) with different catalytic efficiencies. The first step of the pathway is the synthesis of 5-methylorsellinic acid (5MOA) by the cytosolic polyketide synthase mpaC. 5MOA is then converted to the phthalide compound 5,7-dihydroxy-4,6-dimethylphthalide (DHMP) by the endoplasmic reticulum-bound cytochrome P450 monooxygenase mpaDE. MpaDE first catalyzes hydroxylation of 5-MOA to 4,6-dihydroxy-2-(hydroxymethyl)-3-methylbenzoic acid (DHMB). MpaDE then acts as a lactone synthase that catalyzes the ring closure to convert DHMB into DHMP. The next step is the prenylation of DHMP by the Golgi apparatus-associated prenyltransferase mpaA to yield farnesyl-DHMP (FDHMP). The ER-bound oxygenase mpaB then mediates the oxidative cleavage the C19-C20 double bond in FDHMP to yield FDHMP-3C via a mycophenolic aldehyde intermediate. The O-methyltransferase mpaG catalyzes the methylation of FDHMP-3C to yield MFDHMP-3C. MpaG and mpaB can also switch the order in which they act and, in this case, the conversion of FDHMP to MFDHMP-3C can take place via 5-O-methyl-FDHMP (MFDHMP). After the cytosolic methylation of FDHMP-3C, MFDHMP-3C enters into peroxisomes probably via free diffusion due to its low molecular weight. Upon a peroxisomal CoA ligation reaction, catalyzed by a beta-oxidation component enzyme acyl-CoA ligase ACL891, MFDHMP-3C-CoA would then be restricted to peroxisomes for the following beta-oxidation pathway steps. The peroxisomal beta-oxidation machinery than converts MFDHMP-3C-CoA into MPA_CoA, via a beta-oxidation chain-shortening process. Finally mpaH acts as a peroxisomal acyl-CoA hydrolase with high substrate specificity toward MPA-CoA to release the final product MPA. MpaH can also hydrolyze DMMPA-CoA to release demethylmycophenolic acid (DMMPA) that is further converted to MPA by mpaG. The polypeptide is O-methyltransferase mpaG' (Penicillium brevicompactum).